A 172-amino-acid chain; its full sequence is Small ribosomal subunit protein uS5 (172 aa).

One can recognise an S5 DRBM domain in the interval 15 to 78 (YIEKLVNIRR…DKARKRMKSV (64 aa)).

Belongs to the universal ribosomal protein uS5 family. In terms of assembly, part of the 30S ribosomal subunit. Contacts proteins S4 and S8.

With S4 and S12 plays an important role in translational accuracy. In terms of biological role, located at the back of the 30S subunit body where it stabilizes the conformation of the head with respect to the body. This is Small ribosomal subunit protein uS5 from Ruthia magnifica subsp. Calyptogena magnifica.